A 114-amino-acid chain; its full sequence is uncharacterized protein (114 aa).

2 disordered regions span residues 26 to 45 and 72 to 98; these read GMKQKRKPASSEPTPEDALG and PKGSEPPGRSAGLQGATERSGRPSVQA.

This is an uncharacterized protein from Homo sapiens (Human).